A 957-amino-acid polypeptide reads, in one-letter code: ERC protein 2 (957 aa).

Residues 1 to 13 show a composition bias toward polar residues; it reads MYGSARTISNLEG. The interval 1–44 is disordered; it reads MYGSARTISNLEGSPSRSPRLPRSPRLGHRRTSSGGGGGTGKTL. The span at 14–25 shows a compositional bias: low complexity; the sequence is SPSRSPRLPRSP. 2 positions are modified to phosphoserine: serine 65 and serine 666. Residues 140–917 adopt a coiled-coil conformation; the sequence is RQVRDSTMLD…RMKLMADNYD (778 aa). Residues 922 to 943 show a composition bias toward basic residues; the sequence is HYHHHHHHHHHRSPGRSQHSNH. The tract at residues 922–957 is disordered; sequence HYHHHHHHHHHRSPGRSQHSNHRPSPDQDDEEGIWA. Acidic residues predominate over residues 948 to 957; that stretch reads DQDDEEGIWA.

In terms of assembly, interacts with BSN, ERC1, PPFIA1, PPFIA2, PPFIA3 and PPFIA4. Interacts through its C-terminus with the PDZ domain of RIMS1. Part of a complex consisting of ERC2, RIMS1 and UNC13A. Expressed throughout the central nervous system, including hippocampus, cortex, cerebellum and olfactory bulb.

It is found in the cytoplasm. The protein localises to the synapse. Its subcellular location is the presynaptic active zone. It localises to the cytoskeleton. Functionally, thought to be involved in the organization of the cytomatrix at the nerve terminals active zone (CAZ) which regulates neurotransmitter release. Seems to act together with BSN. May recruit liprin-alpha proteins to the CAZ. The polypeptide is ERC protein 2 (Erc2) (Mus musculus (Mouse)).